Reading from the N-terminus, the 238-residue chain is Anti-sigma-K factor RskA (238 aa).

The Cytoplasmic segment spans residues 1–97 (MTSPQNDLLS…RSSSRRRAAA (97 aa)). Residues 98–118 (VLSAAAAVVIGLGTLAVGYAL) traverse the membrane as a helical segment. Over 119–238 (RPAPTPSTAE…TPVFAELPLT (120 aa)) the chain is Extracellular.

It belongs to the anti-sigma-K factor family.

It is found in the cell membrane. An anti-sigma factor for extracytoplasmic function (ECF) sigma factor SigK. ECF sigma factors are held in an inactive form by an anti-sigma factor until released by regulated intramembrane proteolysis (RIP). RIP occurs when an extracytoplasmic signal triggers a concerted proteolytic cascade to transmit information and elicit cellular responses. The membrane-spanning regulatory substrate protein is first cut extracytoplasmically (site-1 protease, S1P), then within the membrane itself (site-2 protease, S2P, Rip1), while cytoplasmic proteases finish degrading the regulatory protein, liberating the sigma factor. The sequence is that of Anti-sigma-K factor RskA (rskA) from Mycolicibacterium vanbaalenii (strain DSM 7251 / JCM 13017 / BCRC 16820 / KCTC 9966 / NRRL B-24157 / PYR-1) (Mycobacterium vanbaalenii).